A 174-amino-acid chain; its full sequence is Large ribosomal subunit protein uL10 (174 aa).

Belongs to the universal ribosomal protein uL10 family. In terms of assembly, part of the ribosomal stalk of the 50S ribosomal subunit. The N-terminus interacts with L11 and the large rRNA to form the base of the stalk. The C-terminus forms an elongated spine to which L12 dimers bind in a sequential fashion forming a multimeric L10(L12)X complex.

Forms part of the ribosomal stalk, playing a central role in the interaction of the ribosome with GTP-bound translation factors. The chain is Large ribosomal subunit protein uL10 from Bordetella bronchiseptica (strain ATCC BAA-588 / NCTC 13252 / RB50) (Alcaligenes bronchisepticus).